The chain runs to 147 residues: Gastrula-specific protein 17 (147 aa).

A disordered region spans residues 1-119 (MSQNLDFLAL…TQVYGNHQPG (119 aa)). Polar residues-rich tracts occupy residues 20–36 (SPTSRHPSPKVWNSTPP), 45–57 (RQISPTPDQYTNP), and 74–88 (LLQNQRQSWGLSPTA).

The polypeptide is Gastrula-specific protein 17 (gs17) (Xenopus laevis (African clawed frog)).